We begin with the raw amino-acid sequence, 330 residues long: Ribosomal RNA large subunit methyltransferase F (330 aa).

It belongs to the methyltransferase superfamily. METTL16/RlmF family.

The protein localises to the cytoplasm. It carries out the reaction adenosine(1618) in 23S rRNA + S-adenosyl-L-methionine = N(6)-methyladenosine(1618) in 23S rRNA + S-adenosyl-L-homocysteine + H(+). Functionally, specifically methylates the adenine in position 1618 of 23S rRNA. The chain is Ribosomal RNA large subunit methyltransferase F from Pseudoalteromonas atlantica (strain T6c / ATCC BAA-1087).